The sequence spans 355 residues: Beta-ketoacyl-[acyl-carrier-protein] synthase III (355 aa).

Residues Cys122 and His280 contribute to the active site. Residues 281–285 (QANMR) form an ACP-binding region. Residue Asn311 is part of the active site.

This sequence belongs to the thiolase-like superfamily. FabH family. Homodimer.

Its subcellular location is the cytoplasm. It carries out the reaction malonyl-[ACP] + acetyl-CoA + H(+) = 3-oxobutanoyl-[ACP] + CO2 + CoA. The protein operates within lipid metabolism; fatty acid biosynthesis. In terms of biological role, catalyzes the condensation reaction of fatty acid synthesis by the addition to an acyl acceptor of two carbons from malonyl-ACP. Catalyzes the first condensation reaction which initiates fatty acid synthesis and may therefore play a role in governing the total rate of fatty acid production. Possesses both acetoacetyl-ACP synthase and acetyl transacylase activities. Its substrate specificity determines the biosynthesis of branched-chain and/or straight-chain of fatty acids. In Kocuria rhizophila (strain ATCC 9341 / DSM 348 / NBRC 103217 / DC2201), this protein is Beta-ketoacyl-[acyl-carrier-protein] synthase III.